Reading from the N-terminus, the 148-residue chain is NADPH-dependent 7-cyano-7-deazaguanine reductase (148 aa).

The Thioimide intermediate role is filled by Cys50. The active-site Proton donor is Asp57. Residues 72-74 (VES) and 91-92 (HE) each bind substrate.

Belongs to the GTP cyclohydrolase I family. QueF type 1 subfamily.

The protein localises to the cytoplasm. The enzyme catalyses 7-aminomethyl-7-carbaguanine + 2 NADP(+) = 7-cyano-7-deazaguanine + 2 NADPH + 3 H(+). The protein operates within tRNA modification; tRNA-queuosine biosynthesis. Its function is as follows. Catalyzes the NADPH-dependent reduction of 7-cyano-7-deazaguanine (preQ0) to 7-aminomethyl-7-deazaguanine (preQ1). This is NADPH-dependent 7-cyano-7-deazaguanine reductase from Helicobacter pylori (strain P12).